The chain runs to 252 residues: Chlorophyll a-b binding protein P4, chloroplastic (252 aa).

Chlorophyll b is bound at residue W56. 2 residues coordinate chlorophyll a: F76 and E95. A chlorophyll b-binding site is contributed by R100. The next 2 membrane-spanning stretches (helical) occupy residues 101–121 and 134–154; these read WAMLGVAGMLLPEVFTSIGII and YFASSSTLFVIEFILSHYVEI. The chlorophyll b site is built by S137, V143, E153, and R156. 6 residues coordinate chlorophyll a: K203, E204, N207, R209, Q221, and H236.

The protein belongs to the light-harvesting chlorophyll a/b-binding (LHC) protein family. As to quaternary structure, the LHC complex consists of chlorophyll a-b binding proteins. Binds at least 14 chlorophylls (8 Chl-a and 6 Chl-b) and carotenoids such as lutein and neoxanthin. serves as cofactor. Post-translationally, photoregulated by reversible phosphorylation of its threonine residues.

Its subcellular location is the plastid. It is found in the chloroplast thylakoid membrane. The light-harvesting complex (LHC) functions as a light receptor, it captures and delivers excitation energy to photosystems with which it is closely associated. In terms of biological role, may channel protons produced in the catalytic Mn center of water oxidation into the thylakoid lumen. The protein is Chlorophyll a-b binding protein P4, chloroplastic of Pisum sativum (Garden pea).